A 476-amino-acid chain; its full sequence is ATP synthase subunit beta (476 aa).

162-169 lines the ATP pocket; it reads GGAGVGKT.

It belongs to the ATPase alpha/beta chains family. As to quaternary structure, F-type ATPases have 2 components, CF(1) - the catalytic core - and CF(0) - the membrane proton channel. CF(1) has five subunits: alpha(3), beta(3), gamma(1), delta(1), epsilon(1). CF(0) has three main subunits: a(1), b(2) and c(9-12). The alpha and beta chains form an alternating ring which encloses part of the gamma chain. CF(1) is attached to CF(0) by a central stalk formed by the gamma and epsilon chains, while a peripheral stalk is formed by the delta and b chains.

The protein resides in the cell membrane. The enzyme catalyses ATP + H2O + 4 H(+)(in) = ADP + phosphate + 5 H(+)(out). Functionally, produces ATP from ADP in the presence of a proton gradient across the membrane. The catalytic sites are hosted primarily by the beta subunits. This chain is ATP synthase subunit beta, found in Mycoplasma capricolum subsp. capricolum (strain California kid / ATCC 27343 / NCTC 10154).